A 362-amino-acid chain; its full sequence is Salactin (362 aa).

Acidic residues predominate over residues 1–10; that stretch reads MSDDTEDDSG. The interval 1–28 is disordered; that stretch reads MSDDTEDDSGGESTADMEFGEQPAPLGV.

In terms of assembly, forms dynamically unstable filaments. Monomers are added at the growing filament end. In vitro, salactin polymerizes in the presence of ATP and AMP-PNP but not in the presence of ADP, GTP, ATPgammaS or buffer alone.

Its subcellular location is the cytoplasm. Actin homolog which might be involved in partitioning DNA between daughter cells when chromosomal copy number is low. This chain is Salactin, found in Halobacterium salinarum (strain ATCC 700922 / JCM 11081 / NRC-1) (Halobacterium halobium).